We begin with the raw amino-acid sequence, 221 residues long: Protein FixW (221 aa).

Residues 5–156 (LNLGSPAPPI…LPKVIDGNWR (152 aa)) form the Thioredoxin domain. A disulfide bridge links C43 with C46.

This sequence belongs to the thioredoxin family.

The protein is Protein FixW (fixW) of Rhizobium leguminosarum.